Consider the following 686-residue polypeptide: U3 small nucleolar RNA-associated protein 4 homolog (686 aa).

14 WD repeats span residues 7 to 50, 51 to 92, 93 to 135, 136 to 181, 182 to 226, 227 to 275, 276 to 317, 318 to 377, 378 to 427, 428 to 475, 476 to 516, 517 to 566, 567 to 627, and 628 to 666; these read HRVR…ANYF, QEKF…QALN, IKYA…PDKI, QFER…AVHK, MIVD…SATG, TLVK…SSEK, QWVR…LMEK, VEVK…PLSK, NADH…NISL, KRVS…KHLH, AFQP…VKQL, KLHC…WSRT, VQKQ…FPPT, and NESD…AVER. Residue Lys321 forms a Glycyl lysine isopeptide (Lys-Gly) (interchain with G-Cter in SUMO2) linkage.

In terms of assembly, interacts with HIVEP1 Interacts with NOL11. Part of the small subunit (SSU) processome, composed of more than 70 proteins and the RNA chaperone small nucleolar RNA (snoRNA) U3. May be a component of the proposed t-UTP subcomplex of the ribosomal small subunit (SSU) processome containing at least UTP4, WDR43, HEATR1, UTP15, WDR75. Post-translationally, may be phosphorylated during mitosis; may control the association of this protein with WRD43 and UTP15.

It is found in the nucleus. It localises to the nucleolus. The protein resides in the chromosome. Functionally, ribosome biogenesis factor. Involved in nucleolar processing of pre-18S ribosomal RNA. Part of the small subunit (SSU) processome, first precursor of the small eukaryotic ribosomal subunit. During the assembly of the SSU processome in the nucleolus, many ribosome biogenesis factors, an RNA chaperone and ribosomal proteins associate with the nascent pre-rRNA and work in concert to generate RNA folding, modifications, rearrangements and cleavage as well as targeted d Involved in SSU pre-rRNA processing at sites A', A0, 1 and 2b. Required for optimal pre-ribosomal RNA transcription by RNA polymerase. May be a transcriptional regulator. Its function is as follows. (Microbial infection) Acts as a positive regulator of HIVEP1 which specifically binds to the DNA sequence 5'-GGGACTTTCC-3' found in enhancer elements of numerous viral promoters such as those of HIV-1, SV40, or CMV. This is U3 small nucleolar RNA-associated protein 4 homolog from Homo sapiens (Human).